The following is a 556-amino-acid chain: Formate--tetrahydrofolate ligase (556 aa).

ATP is bound at residue threonine 65–serine 72.

It belongs to the formate--tetrahydrofolate ligase family.

It carries out the reaction (6S)-5,6,7,8-tetrahydrofolate + formate + ATP = (6R)-10-formyltetrahydrofolate + ADP + phosphate. The protein operates within one-carbon metabolism; tetrahydrofolate interconversion. The sequence is that of Formate--tetrahydrofolate ligase from Streptococcus equi subsp. zooepidemicus (strain H70).